We begin with the raw amino-acid sequence, 232 residues long: Uracil phosphoribosyltransferase (232 aa).

K38 to K42 provides a ligand contact to GTP. 5-phospho-alpha-D-ribose 1-diphosphate contacts are provided by residues R87, R112, and D140 to T148. Uracil contacts are provided by residues I204 and G209 to A211. 5-phospho-alpha-D-ribose 1-diphosphate is bound at residue D210.

The protein belongs to the UPRTase family. Requires Mg(2+) as cofactor.

The catalysed reaction is UMP + diphosphate = 5-phospho-alpha-D-ribose 1-diphosphate + uracil. It participates in pyrimidine metabolism; UMP biosynthesis via salvage pathway; UMP from uracil: step 1/1. Allosterically activated by GTP. Functionally, catalyzes the conversion of uracil and 5-phospho-alpha-D-ribose 1-diphosphate (PRPP) to UMP and diphosphate. The polypeptide is Uracil phosphoribosyltransferase (Thermococcus sibiricus (strain DSM 12597 / MM 739)).